The following is a 196-amino-acid chain: Pyridoxal 5'-phosphate synthase subunit PdxT (196 aa).

Position 47 to 49 (47 to 49) interacts with L-glutamine; that stretch reads GES. Residue Cys-79 is the Nucleophile of the active site. L-glutamine is bound by residues Arg-106 and 134–135; that span reads IR. Active-site charge relay system residues include His-170 and Glu-172.

The protein belongs to the glutaminase PdxT/SNO family. In terms of assembly, in the presence of PdxS, forms a dodecamer of heterodimers. Only shows activity in the heterodimer.

It carries out the reaction aldehydo-D-ribose 5-phosphate + D-glyceraldehyde 3-phosphate + L-glutamine = pyridoxal 5'-phosphate + L-glutamate + phosphate + 3 H2O + H(+). The catalysed reaction is L-glutamine + H2O = L-glutamate + NH4(+). It participates in cofactor biosynthesis; pyridoxal 5'-phosphate biosynthesis. Its function is as follows. Catalyzes the hydrolysis of glutamine to glutamate and ammonia as part of the biosynthesis of pyridoxal 5'-phosphate. The resulting ammonia molecule is channeled to the active site of PdxS. In Halalkalibacterium halodurans (strain ATCC BAA-125 / DSM 18197 / FERM 7344 / JCM 9153 / C-125) (Bacillus halodurans), this protein is Pyridoxal 5'-phosphate synthase subunit PdxT.